The primary structure comprises 102 residues: Colipase-like protein 2 (102 aa).

The first 23 residues, 1–23 (MAFTQALVTVLALLAGTLPHRHS), serve as a signal peptide directing secretion. Cystine bridges form between C36-C47, C42-C58, C46-C80, C68-C88, and C82-C99.

This sequence belongs to the colipase family.

Its subcellular location is the secreted. The chain is Colipase-like protein 2 (Clpsl2) from Mus musculus (Mouse).